Consider the following 361-residue polypeptide: Probable mannitol dehydrogenase (361 aa).

Zn(2+) is bound by residues Cys51, His73, Cys104, Cys107, Cys110, Cys118, and Cys167.

Belongs to the zinc-containing alcohol dehydrogenase family. Zn(2+) is required as a cofactor.

The catalysed reaction is D-mannitol + NAD(+) = D-mannose + NADH + H(+). Functionally, oxidizes mannitol to mannose. Provides the initial step by which translocated mannitol is committed to central metabolism and, by regulating mannitol pool size, is important in regulating salt tolerance at the cellular level. The protein is Probable mannitol dehydrogenase (ELI3) of Mesembryanthemum crystallinum (Common ice plant).